The primary structure comprises 140 residues: Large-conductance mechanosensitive channel (140 aa).

The next 2 helical transmembrane spans lie at 21-41 (VGVI…GDVI) and 82-102 (GSFI…FMMI).

This sequence belongs to the MscL family. Homopentamer.

The protein localises to the cell inner membrane. Functionally, channel that opens in response to stretch forces in the membrane lipid bilayer. May participate in the regulation of osmotic pressure changes within the cell. This Leptothrix cholodnii (strain ATCC 51168 / LMG 8142 / SP-6) (Leptothrix discophora (strain SP-6)) protein is Large-conductance mechanosensitive channel.